The following is a 93-amino-acid chain: Sec-independent protein translocase protein TatA (93 aa).

The chain crosses the membrane as a helical span at residues 1 to 21; sequence MGSLSPWHWAILAVVVILLFG. Residues 45-93 are disordered; the sequence is EMQSENKTETSALGAQSESSAANPTPVQSQRVDPPAPSEQGHSEARPAS. Over residues 53–75 the composition is skewed to polar residues; it reads ETSALGAQSESSAANPTPVQSQR.

It belongs to the TatA/E family. As to quaternary structure, the Tat system comprises two distinct complexes: a TatABC complex, containing multiple copies of TatA, TatB and TatC subunits, and a separate TatA complex, containing only TatA subunits. Substrates initially bind to the TatABC complex, which probably triggers association of the separate TatA complex to form the active translocon.

It is found in the cell membrane. Functionally, part of the twin-arginine translocation (Tat) system that transports large folded proteins containing a characteristic twin-arginine motif in their signal peptide across membranes. TatA could form the protein-conducting channel of the Tat system. In Mycolicibacterium paratuberculosis (strain ATCC BAA-968 / K-10) (Mycobacterium paratuberculosis), this protein is Sec-independent protein translocase protein TatA.